Here is a 640-residue protein sequence, read N- to C-terminus: Threonine--tRNA ligase (640 aa).

The TGS domain maps to 1–61 (MVKITYPDNS…MQDSTIKLIT (61 aa)). The interval 242 to 533 (DHRKLGPKLN…LIENFAGEFP (292 aa)) is catalytic. Zn(2+)-binding residues include cysteine 334, histidine 385, and histidine 510.

Belongs to the class-II aminoacyl-tRNA synthetase family. Homodimer. Zn(2+) is required as a cofactor.

It localises to the cytoplasm. The catalysed reaction is tRNA(Thr) + L-threonine + ATP = L-threonyl-tRNA(Thr) + AMP + diphosphate + H(+). Functionally, catalyzes the attachment of threonine to tRNA(Thr) in a two-step reaction: L-threonine is first activated by ATP to form Thr-AMP and then transferred to the acceptor end of tRNA(Thr). Also edits incorrectly charged L-seryl-tRNA(Thr). The chain is Threonine--tRNA ligase from Petrotoga mobilis (strain DSM 10674 / SJ95).